A 486-amino-acid chain; its full sequence is Ribulose bisphosphate carboxylase large chain, plasmid (486 aa).

The substrate site is built by Asn126 and Thr176. Lys178 functions as the Proton acceptor in the catalytic mechanism. Lys180 is a substrate binding site. Positions 204, 206, and 207 each coordinate Mg(2+). Position 204 is an N6-carboxylysine (Lys204). The active-site Proton acceptor is the His296. Substrate contacts are provided by Arg297, His329, and Ser381.

Belongs to the RuBisCO large chain family. Type I subfamily. In terms of assembly, heterohexadecamer of 8 large chains and 8 small chains. The cofactor is Mg(2+).

It catalyses the reaction 2 (2R)-3-phosphoglycerate + 2 H(+) = D-ribulose 1,5-bisphosphate + CO2 + H2O. It carries out the reaction D-ribulose 1,5-bisphosphate + O2 = 2-phosphoglycolate + (2R)-3-phosphoglycerate + 2 H(+). In terms of biological role, ruBisCO catalyzes two reactions: the carboxylation of D-ribulose 1,5-bisphosphate, the primary event in carbon dioxide fixation, as well as the oxidative fragmentation of the pentose substrate. Both reactions occur simultaneously and in competition at the same active site. The polypeptide is Ribulose bisphosphate carboxylase large chain, plasmid (cbbL2) (Cupriavidus necator (strain ATCC 17699 / DSM 428 / KCTC 22496 / NCIMB 10442 / H16 / Stanier 337) (Ralstonia eutropha)).